The primary structure comprises 538 residues: Phosphoenolpyruvate carboxykinase (ATP) (538 aa).

Residues Arg62, Tyr203, and Lys209 each coordinate substrate. ATP-binding positions include Lys209, His228, and 244–252 (GLSGTGKTT). Residues Lys209 and His228 each contribute to the Mn(2+) site. Mn(2+) is bound at residue Asp265. ATP contacts are provided by residues Glu293, Arg329, 445 to 446 (RI), and Thr451. Position 329 (Arg329) interacts with substrate.

Belongs to the phosphoenolpyruvate carboxykinase (ATP) family. In terms of assembly, monomer. The cofactor is Mn(2+).

Its subcellular location is the cytoplasm. The catalysed reaction is oxaloacetate + ATP = phosphoenolpyruvate + ADP + CO2. It functions in the pathway carbohydrate biosynthesis; gluconeogenesis. Involved in the gluconeogenesis. Catalyzes the conversion of oxaloacetate (OAA) to phosphoenolpyruvate (PEP) through direct phosphoryl transfer between the nucleoside triphosphate and OAA. The chain is Phosphoenolpyruvate carboxykinase (ATP) from Haemophilus ducreyi (strain 35000HP / ATCC 700724).